A 561-amino-acid chain; its full sequence is Potassium-transporting ATPase potassium-binding subunit (561 aa).

A run of 10 helical transmembrane segments spans residues I4–I24, A65–L85, I133–V153, L177–V197, F253–F273, A285–E305, G380–G400, M417–V437, M484–L504, and F528–L548.

It belongs to the KdpA family. The system is composed of three essential subunits: KdpA, KdpB and KdpC.

It localises to the cell membrane. Functionally, part of the high-affinity ATP-driven potassium transport (or Kdp) system, which catalyzes the hydrolysis of ATP coupled with the electrogenic transport of potassium into the cytoplasm. This subunit binds the extracellular potassium ions and delivers the ions to the membrane domain of KdpB through an intramembrane tunnel. The protein is Potassium-transporting ATPase potassium-binding subunit of Listeria monocytogenes serovar 1/2a (strain ATCC BAA-679 / EGD-e).